We begin with the raw amino-acid sequence, 144 residues long: Large ribosomal subunit protein uL13 (144 aa).

The protein belongs to the universal ribosomal protein uL13 family. Part of the 50S ribosomal subunit.

Functionally, this protein is one of the early assembly proteins of the 50S ribosomal subunit, although it is not seen to bind rRNA by itself. It is important during the early stages of 50S assembly. In Clostridium acetobutylicum (strain ATCC 824 / DSM 792 / JCM 1419 / IAM 19013 / LMG 5710 / NBRC 13948 / NRRL B-527 / VKM B-1787 / 2291 / W), this protein is Large ribosomal subunit protein uL13.